The following is a 704-amino-acid chain: Meprin A subunit beta (704 aa).

Residues 1–20 (MDARHQPWFLVFATFLLVSG) form the signal peptide. Residues 21 to 64 (LPAPEKFVKDIDGGIDQDIFDINQGLGLDLFEGDIKLEANGKNS) constitute a propeptide that is removed on maturation. Over 21–654 (LPAPEKFVKD…RCEKRGSTRD (634 aa)) the chain is Extracellular. A Peptidase M12A domain is found at 63-257 (NSIIGDHKRW…LKLNQLYNCT (195 aa)). 3 cysteine pairs are disulfide-bonded: cysteine 104–cysteine 256, cysteine 125–cysteine 145, and cysteine 266–cysteine 428. Histidine 153 is a binding site for Zn(2+). Glutamate 154 is a catalytic residue. Residues histidine 157 and histidine 163 each coordinate Zn(2+). Residues asparagine 193, asparagine 219, asparagine 255, asparagine 316, asparagine 422, asparagine 437, asparagine 529, asparagine 548, and asparagine 593 are each glycosylated (N-linked (GlcNAc...) asparagine). Residues 261–430 (SFMDSCDFEL…INLSETRCPH (170 aa)) enclose the MAM domain. In terms of domain architecture, MATH spans 431-586 (HIWHIQNFTQ…GDDIYILLTV (156 aa)). Positions 607 to 647 (VHNACSEVVCQNGGICVVQDGRAECKCPAGEDWWYMGKRCE) constitute an EGF-like domain. 3 cysteine pairs are disulfide-bonded: cysteine 611–cysteine 622, cysteine 616–cysteine 631, and cysteine 633–cysteine 646. The chain crosses the membrane as a helical span at residues 655-678 (TVIIAVSSTVTVFAVMLIITLVSV). Topologically, residues 679 to 704 (YCTRRKYRKKARANTAAMTLENQHAF) are cytoplasmic. Position 697 is a phosphothreonine (threonine 697).

As to quaternary structure, homotetramer consisting of disulfide-linked beta subunits, or heterotetramer of two alpha and two beta subunits formed by non-covalent association of two disulfide-linked heterodimers. Interacts with MBL2 through its carbohydrate moiety. This interaction may inhibit its catalytic activity. Interacts with TSPAN8. Zn(2+) is required as a cofactor. Post-translationally, proteolytically activated by trypsin in the intestinal lumen and kallikrein-related peptidases in other tissues. N-glycosylated; contains high mannose and/or complex biantennary structures. In terms of processing, phosphorylated by PKC at multiple sites of its cytoplasmic part. Phosphorylation dcreases activity at the cell surface, leading to diminished substrate cleavage. Isoform 1 is expressed in kidney, intestinal brush borders, and salivary ducts. Isoform 2 has been found in carcinoma cells.

It localises to the cell membrane. Its subcellular location is the secreted. The enzyme catalyses Hydrolysis of proteins, including azocasein, and peptides. Hydrolysis of 5-His-|-Leu-6, 6-Leu-|-Cys-7, 14-Ala-|-Leu-15 and 19-Cys-|-Gly-20 bonds in insulin B chain.. Its activity is regulated as follows. Strongly inhibited by fetuin-A/AHSG. Inhibited by cysteine and by the metal ion chelators EDTA and 1,10-phenanthroline. Not inhibited by 3,4-dichloroisocourmarin, soybean trypsin inhibitor, or the cysteine proteinase inhibitors iodoacetic acid and E-64. Functionally, membrane metallopeptidase that sheds many membrane-bound proteins. Exhibits a strong preference for acidic amino acids at the P1' position. Known substrates include: FGF19, VGFA, IL1B, IL18, procollagen I and III, E-cadherin, KLK7, gastrin, ADAM10, tenascin-C. The presence of several pro-inflammatory cytokine among substrates implicate MEP1B in inflammation. It is also involved in tissue remodeling due to its capability to degrade extracellular matrix components. The sequence is that of Meprin A subunit beta (Mep1b) from Mus musculus (Mouse).